Consider the following 1025-residue polypeptide: DNA polymerase (1025 aa).

It belongs to the DNA polymerase type-B family.

It carries out the reaction DNA(n) + a 2'-deoxyribonucleoside 5'-triphosphate = DNA(n+1) + diphosphate. Replicates the viral genome. Host DNA polymerases cannot substitute for the viral enzyme in this process. The protein is DNA polymerase of Noctuidae (owlet moths).